Here is a 209-residue protein sequence, read N- to C-terminus: Probable glutathione peroxidase 8 (209 aa).

Position 1 is an N-acetylmethionine (Met1). The helical transmembrane segment at Val18–Leu40 threads the bilayer. Cys79 is an active-site residue.

The protein belongs to the glutathione peroxidase family.

It localises to the membrane. The enzyme catalyses 2 glutathione + H2O2 = glutathione disulfide + 2 H2O. The chain is Probable glutathione peroxidase 8 (GPX8) from Homo sapiens (Human).